Here is a 501-residue protein sequence, read N- to C-terminus: Na(+)/H(+) antiporter NhaB (501 aa).

11 consecutive transmembrane segments (helical) span residues 24–44, 46–66, 90–110, 145–165, 206–226, 239–259, 302–319, 351–371, 395–415, 450–470, and 478–498; these read VILL…PGVA, WLLI…YPLL, VLTN…IYFM, FLDA…FFSV, LLMH…VGEP, FAGF…AGLA, ALWI…GLAF, FQES…VAVI, MFFI…VATV, VATP…IAPL, and MVIM…YMVT.

This sequence belongs to the NhaB Na(+)/H(+) (TC 2.A.34) antiporter family.

It localises to the cell inner membrane. It carries out the reaction 2 Na(+)(in) + 3 H(+)(out) = 2 Na(+)(out) + 3 H(+)(in). Its function is as follows. Na(+)/H(+) antiporter that extrudes sodium in exchange for external protons. The polypeptide is Na(+)/H(+) antiporter NhaB (Marinobacter nauticus (strain ATCC 700491 / DSM 11845 / VT8) (Marinobacter aquaeolei)).